The chain runs to 271 residues: Bis(5'-nucleosyl)-tetraphosphatase, symmetrical (271 aa).

Belongs to the Ap4A hydrolase family.

The catalysed reaction is P(1),P(4)-bis(5'-adenosyl) tetraphosphate + H2O = 2 ADP + 2 H(+). In terms of biological role, hydrolyzes diadenosine 5',5'''-P1,P4-tetraphosphate to yield ADP. This chain is Bis(5'-nucleosyl)-tetraphosphatase, symmetrical, found in Aliivibrio fischeri (strain MJ11) (Vibrio fischeri).